The primary structure comprises 284 residues: Tripartite motif-containing protein 12A (284 aa).

An RING-type zinc finger spans residues 15-59 (CPVCLNLMVKPVSADCGHTFCQGCITLYFESIKCDKKVFICPVCR). The B box-type zinc finger occupies 91–132 (QKVFNCARHGKKLQLFCRKDMMAICWLCERSQEHRGHKTALI). C96, H99, C118, and H124 together coordinate Zn(2+). A coiled-coil region spans residues 130–234 (ALIEEVAQEY…QSKLLEDFIS (105 aa)).

The protein belongs to the TRIM/RBCC family. As to expression, expressed in embryonic CNS, liver, kidney, olfactory epithelium.

It is found in the cytoplasm. The chain is Tripartite motif-containing protein 12A (Trim12a) from Mus musculus (Mouse).